The chain runs to 1687 residues: Gag-Pol polyprotein (1687 aa).

Gly2 carries N-myristoyl glycine; by host lipidation. Disordered regions lie at residues 107-126, 136-195, 420-447, and 466-485; these read GQDN…SRLP, LLSE…STVA, HKRE…DRRQ, and GRQA…EGRP. Positions 108-111 match the PTAP/PSAP motif motif; the sequence is QDNG. The span at 139–153 shows a compositional bias: pro residues; it reads EPPPYPTSPPPPPAP. The short motif at 140-143 is the PPXY motif element; that stretch reads PPPY. The stretch at 408–453 forms a coiled coil; the sequence is LQDLIKEAEKVYHKRETEEEKQEREKKETEERERRRDRRQEKNLTK. The CCHC-type zinc-finger motif lies at 490 to 507; it reads DQCAYCKERGHWARECPR. Positions 544–614 constitute a Peptidase A2 domain; the sequence is TEFLVDTGAE…CPAPLLGRDL (71 aa). The active-site Protease; shared with dimeric partner is Asp549. The Reverse transcriptase domain maps to 721-912; the sequence is LDLGILVPCQ…EEVTYLGYLL (192 aa). Residues Asp789, Asp863, Asp864, Asp1162, Glu1200, Asp1221, and Asp1291 each contribute to the Mg(2+) site. The RNase H type-1 domain maps to 1153-1299; that stretch reads LPGVPAWYTD…ADEAAKQAAQ (147 aa). The HHCC-type zinc-finger motif lies at 1339–1377; the sequence is HQLTHLGPDKLLQLVGRTSFHIPNLQSVVREITSKCQVC. The Integrase catalytic domain occupies 1394–1552; that stretch reads RGDRPGVYWE…TPYEILHGGP (159 aa). Residues Asp1405 and Asp1464 each contribute to the Mg(2+) site.

Homohexamer; further associates as homomultimer. The virus core is composed of a lattice formed from hexagonal rings, each containing six capsid monomers. As to quaternary structure, interacts (via PPXY motif) with host NEDD4. Interacts (via PSAP motif) with host TSG101. In terms of assembly, the reverse transcriptase is a monomer (Potential). Interacts (via RNase domains) with host release factor ETF1; this interaction is essential for translational readthrough of amber codon between viral gag and pol genes, as well as for viral replication. Homodimer. Mg(2+) serves as cofactor. Post-translationally, specific enzymatic cleavages by the viral protease yield mature proteins. The protease is released by autocatalytic cleavage. The polyprotein is cleaved during and after budding, this process is termed maturation. In terms of processing, phosphorylated on serine residues.

It localises to the virion. Its subcellular location is the host cell membrane. It is found in the host late endosome membrane. The protein localises to the host endosome. The protein resides in the host multivesicular body. It localises to the host cytoplasm. The catalysed reaction is DNA(n) + a 2'-deoxyribonucleoside 5'-triphosphate = DNA(n+1) + diphosphate. It catalyses the reaction Endonucleolytic cleavage to 5'-phosphomonoester.. Its activity is regulated as follows. Protease: Most efficiently inhibited by Amprenavir, which is able to block Gag-Pol processing in infected cells. Plays a role in budding and is processed by the viral protease during virion maturation outside the cell. During budding, it recruits, in a PPXY-dependent or independent manner, Nedd4-like ubiquitin ligases that conjugate ubiquitin molecules to Gag-Pol, or to Gag-Pol binding host factors. Interaction with HECT ubiquitin ligases probably links the viral protein to the host ESCRT pathway and facilitates release. Functionally, targets Gag and gag-pol polyproteins to the plasma membrane via a multipartite membrane binding signal, that includes its myristoylated N-terminus. Also mediates nuclear localization of the pre-integration complex. Its function is as follows. Constituent of the pre-integration complex (PIC) which tethers the latter to mitotic chromosomes. This allows the integration of the viral genome into the host DNA. In terms of biological role, forms the spherical core of the virion that encapsulates the genomic RNA-nucleocapsid complex. Involved in the packaging and encapsidation of two copies of the genome. Binds with high affinity to conserved UCUG elements within the packaging signal, located near the 5'-end of the genome. This binding is dependent on genome dimerization. Acts as a nucleic acid chaperone which is involved in rearrangement of nucleic acid secondary structures during gRNA retrotranscription. Functionally, protease: The aspartyl protease mediates proteolytic cleavages of Gag and Gag-Pol polyproteins during or shortly after the release of the virion from the plasma membrane. Cleavages take place as an ordered, step-wise cascade to yield mature proteins. This process is called maturation. Displays maximal activity during the budding process just prior to particle release from the cell. Its function is as follows. Reverse transcriptase/ribonuclease H: RT is a multifunctional enzyme that converts the viral dimeric RNA genome into dsDNA in the cytoplasm, shortly after virus entry into the cell. This enzyme displays a DNA polymerase activity that can copy either DNA or RNA templates, and a ribonuclease H (RNase H) activity that cleaves the RNA strand of RNA-DNA heteroduplexes in a partially processive 3' to 5' endonucleasic mode. Conversion of viral genomic RNA into dsDNA requires many steps. A tRNA binds to the primer-binding site (PBS) situated at the 5' end of the viral RNA. RT uses the 3' end of the tRNA primer to perform a short round of RNA-dependent minus-strand DNA synthesis. The reading proceeds through the U5 region and ends after the repeated (R) region which is present at both ends of viral RNA. The portion of the RNA-DNA heteroduplex is digested by the RNase H, resulting in a ssDNA product attached to the tRNA primer. This ssDNA/tRNA hybridizes with the identical R region situated at the 3' end of viral RNA. This template exchange, known as minus-strand DNA strong stop transfer, can be either intra- or intermolecular. RT uses the 3' end of this newly synthesized short ssDNA to perform the RNA-dependent minus-strand DNA synthesis of the whole template. RNase H digests the RNA template except for a polypurine tract (PPT) situated at the 5' end of the genome. It is not clear if both polymerase and RNase H activities are simultaneous. RNase H probably can proceed both in a polymerase-dependent (RNA cut into small fragments by the same RT performing DNA synthesis) and a polymerase-independent mode (cleavage of remaining RNA fragments by free RTs). Secondly, RT performs DNA-directed plus-strand DNA synthesis using the PPT that has not been removed by RNase H as primers. PPT and tRNA primers are then removed by RNase H. The 3' and 5' ssDNA PBS regions hybridize to form a circular dsDNA intermediate. Strand displacement synthesis by RT to the PBS and PPT ends produces a blunt ended, linear dsDNA copy of the viral genome that includes long terminal repeats (LTRs) at both ends. In terms of biological role, catalyzes viral DNA integration into the host chromosome, by performing a series of DNA cutting and joining reactions. This enzyme activity takes place after virion entry into a cell and reverse transcription of the RNA genome in dsDNA. The first step in the integration process is 3' processing. This step requires a complex comprising the viral genome, matrix protein and integrase. This complex is called the pre-integration complex (PIC). The integrase protein removes 2 nucleotides from each 3' end of the viral DNA, leaving recessed CA OH's at the 3' ends. In the second step that requires cell division, the PIC enters cell nucleus. In the third step, termed strand transfer, the integrase protein joins the previously processed 3' ends to the 5' ends of strands of target cellular DNA at the site of integration. The last step is viral DNA integration into host chromosome. In Phascolarctos cinereus (Koala), this protein is Gag-Pol polyprotein (pro-pol).